A 380-amino-acid chain; its full sequence is Cytochrome b (380 aa).

The next 4 membrane-spanning stretches (helical) occupy residues Phe-34–Met-54, Trp-78–Ile-99, Trp-114–Leu-134, and Phe-179–Thr-199. 2 residues coordinate heme b: His-84 and His-98. Residues His-183 and His-197 each coordinate heme b. Position 202 (His-202) interacts with a ubiquinone. 4 helical membrane passes run Leu-227–Ser-247, Leu-289–His-309, Leu-321–Ser-341, and Phe-348–Pro-368.

It belongs to the cytochrome b family. As to quaternary structure, the cytochrome bc1 complex contains 11 subunits: 3 respiratory subunits (MT-CYB, CYC1 and UQCRFS1), 2 core proteins (UQCRC1 and UQCRC2) and 6 low-molecular weight proteins (UQCRH/QCR6, UQCRB/QCR7, UQCRQ/QCR8, UQCR10/QCR9, UQCR11/QCR10 and a cleavage product of UQCRFS1). This cytochrome bc1 complex then forms a dimer. Requires heme b as cofactor.

The protein localises to the mitochondrion inner membrane. Its function is as follows. Component of the ubiquinol-cytochrome c reductase complex (complex III or cytochrome b-c1 complex) that is part of the mitochondrial respiratory chain. The b-c1 complex mediates electron transfer from ubiquinol to cytochrome c. Contributes to the generation of a proton gradient across the mitochondrial membrane that is then used for ATP synthesis. The polypeptide is Cytochrome b (MT-CYB) (Polyplectron bicalcaratum (Grey peacock-pheasant)).